We begin with the raw amino-acid sequence, 344 residues long: Anthranilate phosphoribosyltransferase (344 aa).

5-phospho-alpha-D-ribose 1-diphosphate is bound by residues G80, 83–84, T88, 90–93, 108–116, and S120; these read GD, NIST, and KHGNRSISS. Anthranilate is bound at residue G80. S92 is a Mg(2+) binding site. N111 serves as a coordination point for anthranilate. R166 contributes to the anthranilate binding site. D229 and E230 together coordinate Mg(2+).

The protein belongs to the anthranilate phosphoribosyltransferase family. As to quaternary structure, homodimer. Mg(2+) is required as a cofactor.

The catalysed reaction is N-(5-phospho-beta-D-ribosyl)anthranilate + diphosphate = 5-phospho-alpha-D-ribose 1-diphosphate + anthranilate. It functions in the pathway amino-acid biosynthesis; L-tryptophan biosynthesis; L-tryptophan from chorismate: step 2/5. In terms of biological role, catalyzes the transfer of the phosphoribosyl group of 5-phosphorylribose-1-pyrophosphate (PRPP) to anthranilate to yield N-(5'-phosphoribosyl)-anthranilate (PRA). The sequence is that of Anthranilate phosphoribosyltransferase from Chloroherpeton thalassium (strain ATCC 35110 / GB-78).